The primary structure comprises 208 residues: TnpB-like protein MJ0012 (208 aa).

Residues Cys-83, Cys-86, Cys-100, and Cys-103 each contribute to the Zn(2+) site.

The protein belongs to the transposase 35 family.

The sequence is that of TnpB-like protein MJ0012 from Methanocaldococcus jannaschii (strain ATCC 43067 / DSM 2661 / JAL-1 / JCM 10045 / NBRC 100440) (Methanococcus jannaschii).